The chain runs to 214 residues: Adenylate kinase (214 aa).

An ATP-binding site is contributed by 10-15 (GAGKGT). The tract at residues 30–59 (STGDMLRAAIKAGTELGKQAKSVIDAGQLV) is NMP. AMP-binding positions include threonine 31, arginine 36, 57 to 59 (QLV), 85 to 88 (GFPR), and glutamine 92. Residues 122–159 (GRRAHLPSGRTYHNVYNPPKEEGKDDITGEELVVRDDD) form an LID region. ATP-binding positions include arginine 123 and 132–133 (TY). AMP-binding residues include arginine 156 and arginine 167. An ATP-binding site is contributed by lysine 200.

This sequence belongs to the adenylate kinase family. As to quaternary structure, monomer.

The protein localises to the cytoplasm. The catalysed reaction is AMP + ATP = 2 ADP. It participates in purine metabolism; AMP biosynthesis via salvage pathway; AMP from ADP: step 1/1. Catalyzes the reversible transfer of the terminal phosphate group between ATP and AMP. Plays an important role in cellular energy homeostasis and in adenine nucleotide metabolism. This chain is Adenylate kinase, found in Vibrio atlanticus (strain LGP32) (Vibrio splendidus (strain Mel32)).